Here is a 103-residue protein sequence, read N- to C-terminus: Small ribosomal subunit protein uS10 (103 aa).

This sequence belongs to the universal ribosomal protein uS10 family. Part of the 30S ribosomal subunit.

Functionally, involved in the binding of tRNA to the ribosomes. The polypeptide is Small ribosomal subunit protein uS10 (Actinobacillus pleuropneumoniae serotype 5b (strain L20)).